Here is a 482-residue protein sequence, read N- to C-terminus: MKFIIKLFPEITIKSQSVRLRFIKILTGNIRNVLKHYDETLAVVRHWDNIEVRAKDENQRLAIRDALTRIPGIHHILEVEDVPFTDMHDIFEKALAQYREQLEGKTFCVRVKRRGKHEFSSIEVERYVGGGLNQHIESARVKLTNPDVTVHLEVEDDRLLLIKGRYEGIGGFPIGTQEDVLSLISGGFDSGVSSYMLMRRGCRVHYCFFNLGGAAHEIGVRQVAHYLWNRFGSSHRVRFVAINFEPVVGEILEKVDDGQMGVVLKRMMVRAASKVAERYGVQALVTGEALGQVSSQTLTNLRLIDNVSDTLILRPLISYDKEHIINLARQIGTEDFARTMPEYCGVISKSPTVKAIKAKIEAEEENFDFSILDKVVEEANNVDIREIAQQTQQEVVEVETVSGFGPNDVILDIRSVDEQDDKPLKVEGVDVVSLPFYKLSTKFGDLDQSKTWLLWCERGVMSRLQALYLREQGFENVKVYRP.

A THUMP domain is found at 61-165 (LAIRDALTRI…DDRLLLIKGR (105 aa)). ATP is bound by residues 183–184 (LI), Lys265, Gly287, and Gln296. Cys344 and Cys456 are oxidised to a cystine. Residues 404–482 (FGPNDVILDI…GFENVKVYRP (79 aa)) form the Rhodanese domain. The Cysteine persulfide intermediate role is filled by Cys456.

Belongs to the ThiI family.

It is found in the cytoplasm. It carries out the reaction [ThiI sulfur-carrier protein]-S-sulfanyl-L-cysteine + a uridine in tRNA + 2 reduced [2Fe-2S]-[ferredoxin] + ATP + H(+) = [ThiI sulfur-carrier protein]-L-cysteine + a 4-thiouridine in tRNA + 2 oxidized [2Fe-2S]-[ferredoxin] + AMP + diphosphate. The enzyme catalyses [ThiS sulfur-carrier protein]-C-terminal Gly-Gly-AMP + S-sulfanyl-L-cysteinyl-[cysteine desulfurase] + AH2 = [ThiS sulfur-carrier protein]-C-terminal-Gly-aminoethanethioate + L-cysteinyl-[cysteine desulfurase] + A + AMP + 2 H(+). Its pathway is cofactor biosynthesis; thiamine diphosphate biosynthesis. Catalyzes the ATP-dependent transfer of a sulfur to tRNA to produce 4-thiouridine in position 8 of tRNAs, which functions as a near-UV photosensor. Also catalyzes the transfer of sulfur to the sulfur carrier protein ThiS, forming ThiS-thiocarboxylate. This is a step in the synthesis of thiazole, in the thiamine biosynthesis pathway. The sulfur is donated as persulfide by IscS. The sequence is that of tRNA sulfurtransferase from Salmonella enteritidis PT4 (strain P125109).